The primary structure comprises 497 residues: Cytochrome P450 2D6 (497 aa).

A substrate-binding site is contributed by aspartate 301. Cysteine 443 contributes to the heme binding site.

This sequence belongs to the cytochrome P450 family. It depends on heme as a cofactor.

It localises to the endoplasmic reticulum membrane. The protein resides in the microsome membrane. The catalysed reaction is (5Z,8Z,11Z,14Z)-eicosatetraenoate + reduced [NADPH--hemoprotein reductase] + O2 = (8R,9S)-epoxy-(5Z,11Z,14Z)-eicosatrienoate + oxidized [NADPH--hemoprotein reductase] + H2O + H(+). The enzyme catalyses (5Z,8Z,11Z,14Z)-eicosatetraenoate + reduced [NADPH--hemoprotein reductase] + O2 = (11R,12S)-epoxy-(5Z,8Z,14Z)-eicosatrienoate + oxidized [NADPH--hemoprotein reductase] + H2O + H(+). It carries out the reaction (5Z,8Z,11Z,14Z)-eicosatetraenoate + reduced [NADPH--hemoprotein reductase] + O2 = (14S,15R)-epoxy-(5Z,8Z,11Z)-eicosatrienoate + oxidized [NADPH--hemoprotein reductase] + H2O + H(+). It catalyses the reaction N-(5Z,8Z,11Z,14Z-eicosatetraenoyl)-ethanolamine + reduced [NADPH--hemoprotein reductase] + O2 = N-(8,9-epoxy-5Z,11Z,14Z-eicosatrienoyl)-ethanolamine + oxidized [NADPH--hemoprotein reductase] + H2O + H(+). The catalysed reaction is N-(5Z,8Z,11Z,14Z-eicosatetraenoyl)-ethanolamine + reduced [NADPH--hemoprotein reductase] + O2 = N-(11,12-epoxy-5Z,8Z,14Z-eicosatrienoyl)-ethanolamine + oxidized [NADPH--hemoprotein reductase] + H2O + H(+). The enzyme catalyses N-(5Z,8Z,11Z,14Z-eicosatetraenoyl)-ethanolamine + reduced [NADPH--hemoprotein reductase] + O2 = N-(14,15-epoxy-5Z,8Z,11Z-eicosatrienoyl)-ethanolamine + oxidized [NADPH--hemoprotein reductase] + H2O + H(+). It carries out the reaction N-(5Z,8Z,11Z,14Z-eicosatetraenoyl)-ethanolamine + reduced [NADPH--hemoprotein reductase] + O2 = N-(20-hydroxy-5Z,8Z,11Z,14Z-eicosatetraenoyl)-ethanolamine + oxidized [NADPH--hemoprotein reductase] + H2O + H(+). It catalyses the reaction (5Z,8Z,11Z,14Z,17Z)-eicosapentaenoate + reduced [NADPH--hemoprotein reductase] + O2 = (17S,18R)-epoxy-(5Z,8Z,11Z,14Z)-eicosatetraenoate + oxidized [NADPH--hemoprotein reductase] + H2O + H(+). The catalysed reaction is (4Z,7Z,10Z,13Z,16Z,19Z)-docosahexaenoate + reduced [NADPH--hemoprotein reductase] + O2 = (19R,20S)-epoxy-(4Z,7Z,10Z,13Z,16Z)-docosapentaenoate + oxidized [NADPH--hemoprotein reductase] + H2O + H(+). The enzyme catalyses (4Z,7Z,10Z,13Z,16Z,19Z)-docosahexaenoate + reduced [NADPH--hemoprotein reductase] + O2 = (19S,20R)-epoxy-(4Z,7Z,10Z,13Z,16Z)-docosapentaenoate + oxidized [NADPH--hemoprotein reductase] + H2O + H(+). It carries out the reaction cholesterol + reduced [NADPH--hemoprotein reductase] + O2 = 25-hydroxycholesterol + oxidized [NADPH--hemoprotein reductase] + H2O + H(+). It catalyses the reaction all-trans-retinol + reduced [NADPH--hemoprotein reductase] + O2 = all-trans-retinal + oxidized [NADPH--hemoprotein reductase] + 2 H2O + H(+). It functions in the pathway cofactor metabolism; retinol metabolism. Its pathway is lipid metabolism; fatty acid metabolism. The protein operates within steroid metabolism; cholesterol metabolism. In terms of biological role, a cytochrome P450 monooxygenase involved in the metabolism of fatty acids, steroids and retinoids. Mechanistically, uses molecular oxygen inserting one oxygen atom into a substrate, and reducing the second into a water molecule, with two electrons provided by NADPH via cytochrome P450 reductase (NADPH--hemoprotein reductase). Catalyzes the epoxidation of double bonds of polyunsaturated fatty acids (PUFA). Metabolizes endocannabinoid arachidonoylethanolamide (anandamide) to 20-hydroxyeicosatetraenoic acid ethanolamide (20-HETE-EA) and 8,9-, 11,12-, and 14,15-epoxyeicosatrienoic acid ethanolamides (EpETrE-EAs), potentially modulating endocannabinoid system signaling. Catalyzes the hydroxylation of carbon-hydrogen bonds. Metabolizes cholesterol toward 25-hydroxycholesterol, a physiological regulator of cellular cholesterol homeostasis. Catalyzes the oxidative transformations of all-trans retinol to all-trans retinal, a precursor for the active form all-trans-retinoic acid. Also involved in the oxidative metabolism of drugs such as antiarrhythmics, adrenoceptor antagonists, and tricyclic antidepressants. The chain is Cytochrome P450 2D6 from Homo sapiens (Human).